We begin with the raw amino-acid sequence, 170 residues long: MNDQRKGDHAEPTTHFGYQDVPESQKAKKVAEVFHSVAAKYDLMNDVLSGGMHRLWKRFTIELSGVRAGNRVLDIAGGTGDLAAKFSRLVGPTGQVVLADINESMLKVGRDRLLDRGVAGNIEFVQADAEKLPFPDNHFDCVTIAFGLRNVTHKDEAIRSMLRVLKPGGR.

Basic and acidic residues predominate over residues 1–12; the sequence is MNDQRKGDHAEP. Residues 1–22 are disordered; that stretch reads MNDQRKGDHAEPTTHFGYQDVP.

The protein belongs to the class I-like SAM-binding methyltransferase superfamily. MenG/UbiE family.

It carries out the reaction a 2-demethylmenaquinol + S-adenosyl-L-methionine = a menaquinol + S-adenosyl-L-homocysteine + H(+). The catalysed reaction is a 2-methoxy-6-(all-trans-polyprenyl)benzene-1,4-diol + S-adenosyl-L-methionine = a 5-methoxy-2-methyl-3-(all-trans-polyprenyl)benzene-1,4-diol + S-adenosyl-L-homocysteine + H(+). It participates in quinol/quinone metabolism; menaquinone biosynthesis; menaquinol from 1,4-dihydroxy-2-naphthoate: step 2/2. The protein operates within cofactor biosynthesis; ubiquinone biosynthesis. In terms of biological role, methyltransferase required for the conversion of demethylmenaquinol (DMKH2) to menaquinol (MKH2) and the conversion of 2-polyprenyl-6-methoxy-1,4-benzoquinol (DDMQH2) to 2-polyprenyl-3-methyl-6-methoxy-1,4-benzoquinol (DMQH2). The protein is Ubiquinone/menaquinone biosynthesis C-methyltransferase UbiE (ubiE) of Ectopseudomonas oleovorans (Pseudomonas oleovorans).